A 194-amino-acid polypeptide reads, in one-letter code: Probable GTP-binding protein EngB (194 aa).

One can recognise an EngB-type G domain in the interval 22–194; that stretch reads DLPEFALAGR…KFWDWIEDKM (173 aa). GTP-binding positions include 30-37, 57-61, 75-78, 142-145, and 175-177; these read GRSNVGKS, GKTQT, DVPG, TKMD, and FSS. 2 residues coordinate Mg(2+): Ser37 and Thr59.

This sequence belongs to the TRAFAC class TrmE-Era-EngA-EngB-Septin-like GTPase superfamily. EngB GTPase family. Requires Mg(2+) as cofactor.

Functionally, necessary for normal cell division and for the maintenance of normal septation. The polypeptide is Probable GTP-binding protein EngB (Lactobacillus gasseri (strain ATCC 33323 / DSM 20243 / BCRC 14619 / CIP 102991 / JCM 1131 / KCTC 3163 / NCIMB 11718 / NCTC 13722 / AM63)).